Consider the following 329-residue polypeptide: MPPSVATHASLLLKAAAAAAHLHPKPFFSPRAAPPRIPSAPAPPAAGGSRYRPTTTTTAAATATSATAACRWFRWPPPAQAPVRGLCSLPHSGGGGGGGEGMGSEGVGRRRRVVAPAVNGVAKDGAPQPPPPKLLTLPTVLTIGRVAAVPLLISTFYMEGPWAATATTGIFLAAAVTDWLDGYIARKMQLGTPFGAFLDPVADKLMVAATLVLLCTKPLEISLLRDGPWLLTVPAIAIIGREITMSAVREWAASQNTKVLEAVAVNNLGKWKTATQMTALTILLASRDKSLPAQDALVTSGIALLYVSAGLAIWSLVVYMRKIWRILLK.

The transit peptide at 1–34 (MPPSVATHASLLLKAAAAAAHLHPKPFFSPRAAP) directs the protein to the mitochondrion. Positions 27–55 (FFSPRAAPPRIPSAPAPPAAGGSRYRPTT) are disordered. Residues 32–44 (AAPPRIPSAPAPP) are compositionally biased toward pro residues. 5 helical membrane passes run 134–154 (LLTL…LLIS), 156–176 (FYME…AAAV), 194–214 (FGAF…LVLL), 228–248 (PWLL…MSAV), and 298–318 (VTSG…SLVV). At 319-329 (YMRKIWRILLK) the chain is on the mitochondrial intermembrane side.

The protein belongs to the CDP-alcohol phosphatidyltransferase class-I family. It depends on Mn(2+) as a cofactor.

It is found in the mitochondrion inner membrane. It carries out the reaction a CDP-1,2-diacyl-sn-glycerol + a 1,2-diacyl-sn-glycero-3-phospho-(1'-sn-glycerol) = a cardiolipin + CMP + H(+). In terms of biological role, catalyzes the synthesis of cardiolipin (CL) (diphosphatidylglycerol) by specifically transferring a phosphatidyl group from CDP-diacylglycerol to phosphatidylglycerol (PG). CL is a key phospholipid in mitochondrial membranes and plays important roles in maintaining the functional integrity and dynamics of mitochondria under both optimal and stress conditions. The polypeptide is Cardiolipin synthase (CMP-forming) (Oryza sativa subsp. japonica (Rice)).